The following is a 251-amino-acid chain: MAMGVPRVILLCLFGAALCLTGSQALQCYSFEHTYFGPFDLRAMKLPSISCPHECFEAILSLDTGYRAPVTLVRKGCWTGPPAGQTQSNADALPPDYSVVRGCTTDKCNAHLMTHDALPNLSQAPDPPTLSGAECYACIGVHQDDCAIGRSRRVQCHQDQTACFQGNGRMTVGNFSVPVYIRTCHRPSCTTEGTTSPWTAIDLQGSCCEGYLCNRKSMTQPFTSASATTPPRALQVLALLLPVLLLVGLSA.

Residues 1–25 (MAMGVPRVILLCLFGAALCLTGSQA) form the signal peptide. Residues Asn-120 and Asn-174 are each glycosylated (N-linked (GlcNAc...) asparagine). In terms of domain architecture, UPAR/Ly6 spans 135 to 214 (CYACIGVHQD…GSCCEGYLCN (80 aa)). Ala-225 carries GPI-anchor amidated alanine lipidation. Residues 226-251 (SATTPPRALQVLALLLPVLLLVGLSA) constitute a propeptide, removed in mature form.

Its subcellular location is the cell membrane. This is Ly6/PLAUR domain-containing protein 5 (LYPD5) from Homo sapiens (Human).